Reading from the N-terminus, the 437-residue chain is Adenosylhomocysteinase (437 aa).

Positions 54, 130, and 155 each coordinate substrate. 156–158 (TTT) provides a ligand contact to NAD(+). The substrate site is built by Lys-185 and Asp-189. NAD(+)-binding positions include Asn-190, 219 to 224 (GYGDVG), Glu-242, Asn-277, 298 to 300 (IGH), and Asn-345.

Belongs to the adenosylhomocysteinase family. Homotetramer. It depends on NAD(+) as a cofactor.

It localises to the cytoplasm. It carries out the reaction S-adenosyl-L-homocysteine + H2O = L-homocysteine + adenosine. It functions in the pathway amino-acid biosynthesis; L-homocysteine biosynthesis; L-homocysteine from S-adenosyl-L-homocysteine: step 1/1. Its function is as follows. Adenosylhomocysteine is a competitive inhibitor of S-adenosyl-L-methionine-dependent methyl transferase reactions; therefore adenosylhomocysteinase may play a key role in the control of methylations via regulation of the intracellular concentration of adenosylhomocysteine. The chain is Adenosylhomocysteinase from Leishmania donovani.